The chain runs to 1293 residues: Phosphoribosylformylglycinamidine synthase (1293 aa).

ATP contacts are provided by residues 308-319 and Ala-675; that span reads GAATGAGGEIRD. Residues Asp-676, Glu-715, Asn-719, and Asp-883 each coordinate Mg(2+). Ser-885 contributes to the ATP binding site. Residues 1040–1293 form the Glutamine amidotransferase type-1 domain; sequence MAILREQGVN…MFRNARKFIG (254 aa). Cys-1133 serves as the catalytic Nucleophile. Catalysis depends on residues His-1258 and Glu-1260.

In the N-terminal section; belongs to the FGAMS family. In terms of assembly, monomer.

The protein localises to the cytoplasm. The enzyme catalyses N(2)-formyl-N(1)-(5-phospho-beta-D-ribosyl)glycinamide + L-glutamine + ATP + H2O = 2-formamido-N(1)-(5-O-phospho-beta-D-ribosyl)acetamidine + L-glutamate + ADP + phosphate + H(+). It participates in purine metabolism; IMP biosynthesis via de novo pathway; 5-amino-1-(5-phospho-D-ribosyl)imidazole from N(2)-formyl-N(1)-(5-phospho-D-ribosyl)glycinamide: step 1/2. In terms of biological role, phosphoribosylformylglycinamidine synthase involved in the purines biosynthetic pathway. Catalyzes the ATP-dependent conversion of formylglycinamide ribonucleotide (FGAR) and glutamine to yield formylglycinamidine ribonucleotide (FGAM) and glutamate. This Methylobacillus flagellatus (strain ATCC 51484 / DSM 6875 / VKM B-1610 / KT) protein is Phosphoribosylformylglycinamidine synthase.